A 411-amino-acid polypeptide reads, in one-letter code: Mitotic apparatus protein p62 (411 aa).

Acidic residues-rich tracts occupy residues 134–156, 183–201, and 246–321; these read AYEV…EEEE, ELDE…EEEI, and DDDE…EEDS. A disordered region spans residues 134–378; that stretch reads AYEVGDEDLE…KSPSKPKKEE (245 aa). Residues 351–367 show a composition bias toward basic and acidic residues; it reads GMKEKKTYSLEDMKQDL.

This sequence belongs to the nucleoplasmin family. Phosphorylated by CaM-kinase II in vitro.

The protein resides in the nucleus. Required for mitotic progression. Binds to chromatin. This chain is Mitotic apparatus protein p62, found in Lytechinus pictus (Painted sea urchin).